Here is a 1382-residue protein sequence, read N- to C-terminus: DNA-directed RNA polymerase subunit beta' (1382 aa).

Residues C70, C72, C85, and C88 each contribute to the Zn(2+) site. The Mg(2+) site is built by D460, D462, and D464. Residues C808, C882, C889, and C892 each contribute to the Zn(2+) site.

It belongs to the RNA polymerase beta' chain family. The RNAP catalytic core consists of 2 alpha, 1 beta, 1 beta' and 1 omega subunit. When a sigma factor is associated with the core the holoenzyme is formed, which can initiate transcription. It depends on Mg(2+) as a cofactor. Zn(2+) is required as a cofactor.

The enzyme catalyses RNA(n) + a ribonucleoside 5'-triphosphate = RNA(n+1) + diphosphate. In terms of biological role, DNA-dependent RNA polymerase catalyzes the transcription of DNA into RNA using the four ribonucleoside triphosphates as substrates. In Geobacter sp. (strain M21), this protein is DNA-directed RNA polymerase subunit beta'.